Reading from the N-terminus, the 298-residue chain is 4-diphosphocytidyl-2-C-methyl-D-erythritol kinase (298 aa).

Lysine 15 is an active-site residue. 102 to 112 (PVAAGIGGGSS) serves as a coordination point for ATP. The active site involves aspartate 142.

This sequence belongs to the GHMP kinase family. IspE subfamily.

It carries out the reaction 4-CDP-2-C-methyl-D-erythritol + ATP = 4-CDP-2-C-methyl-D-erythritol 2-phosphate + ADP + H(+). Its pathway is isoprenoid biosynthesis; isopentenyl diphosphate biosynthesis via DXP pathway; isopentenyl diphosphate from 1-deoxy-D-xylulose 5-phosphate: step 3/6. In terms of biological role, catalyzes the phosphorylation of the position 2 hydroxy group of 4-diphosphocytidyl-2C-methyl-D-erythritol. This is 4-diphosphocytidyl-2-C-methyl-D-erythritol kinase from Hyphomonas neptunium (strain ATCC 15444).